Consider the following 108-residue polypeptide: Putative septation protein SpoVG (108 aa).

The segment at 84 to 108 (FEKQSSVETEPVTEENMETAENENE) is disordered. Residues 94-108 (PVTEENMETAENENE) show a composition bias toward acidic residues.

This sequence belongs to the SpoVG family.

Its function is as follows. Could be involved in septation. In Finegoldia magna (strain ATCC 29328 / DSM 20472 / WAL 2508) (Peptostreptococcus magnus), this protein is Putative septation protein SpoVG.